A 187-amino-acid chain; its full sequence is Adenine phosphoribosyltransferase (187 aa).

This sequence belongs to the purine/pyrimidine phosphoribosyltransferase family. In terms of assembly, homodimer.

Its subcellular location is the cytoplasm. The catalysed reaction is AMP + diphosphate = 5-phospho-alpha-D-ribose 1-diphosphate + adenine. It participates in purine metabolism; AMP biosynthesis via salvage pathway; AMP from adenine: step 1/1. Catalyzes a salvage reaction resulting in the formation of AMP, that is energically less costly than de novo synthesis. The polypeptide is Adenine phosphoribosyltransferase (Yersinia enterocolitica serotype O:8 / biotype 1B (strain NCTC 13174 / 8081)).